The chain runs to 337 residues: Lipoyl synthase (337 aa).

Residues Cys-81, Cys-86, Cys-92, Cys-107, Cys-111, Cys-114, and Ser-323 each contribute to the [4Fe-4S] cluster site. Positions Phe-93–Ser-312 constitute a Radical SAM core domain.

The protein belongs to the radical SAM superfamily. Lipoyl synthase family. The cofactor is [4Fe-4S] cluster.

Its subcellular location is the cytoplasm. It carries out the reaction [[Fe-S] cluster scaffold protein carrying a second [4Fe-4S](2+) cluster] + N(6)-octanoyl-L-lysyl-[protein] + 2 oxidized [2Fe-2S]-[ferredoxin] + 2 S-adenosyl-L-methionine + 4 H(+) = [[Fe-S] cluster scaffold protein] + N(6)-[(R)-dihydrolipoyl]-L-lysyl-[protein] + 4 Fe(3+) + 2 hydrogen sulfide + 2 5'-deoxyadenosine + 2 L-methionine + 2 reduced [2Fe-2S]-[ferredoxin]. It participates in protein modification; protein lipoylation via endogenous pathway; protein N(6)-(lipoyl)lysine from octanoyl-[acyl-carrier-protein]: step 2/2. Its function is as follows. Catalyzes the radical-mediated insertion of two sulfur atoms into the C-6 and C-8 positions of the octanoyl moiety bound to the lipoyl domains of lipoate-dependent enzymes, thereby converting the octanoylated domains into lipoylated derivatives. The protein is Lipoyl synthase of Xanthomonas oryzae pv. oryzae (strain MAFF 311018).